We begin with the raw amino-acid sequence, 249 residues long: 2,3-bisphosphoglycerate-dependent phosphoglycerate mutase 2 (249 aa).

Substrate contacts are provided by residues R8 to N15, T21 to G22, R60, E87 to Y90, K98, R114 to R115, and G183 to N184. Residue H9 is the Tele-phosphohistidine intermediate of the active site. E87 functions as the Proton donor/acceptor in the catalytic mechanism.

This sequence belongs to the phosphoglycerate mutase family. BPG-dependent PGAM subfamily. In terms of assembly, homodimer.

It catalyses the reaction (2R)-2-phosphoglycerate = (2R)-3-phosphoglycerate. The protein operates within carbohydrate degradation; glycolysis; pyruvate from D-glyceraldehyde 3-phosphate: step 3/5. Its function is as follows. Catalyzes the interconversion of 2-phosphoglycerate and 3-phosphoglycerate. The sequence is that of 2,3-bisphosphoglycerate-dependent phosphoglycerate mutase 2 from Nitrosomonas europaea (strain ATCC 19718 / CIP 103999 / KCTC 2705 / NBRC 14298).